The following is a 161-amino-acid chain: Ferric uptake regulation protein 1 (161 aa).

Residues cysteine 94 and cysteine 97 each contribute to the Zn(2+) site.

The protein belongs to the Fur family.

The protein resides in the cytoplasm. In terms of biological role, acts as a global negative controlling element, employing Fe(2+) as a cofactor to bind the operator of the repressed genes. The chain is Ferric uptake regulation protein 1 (fur1) from Mycolicibacterium fortuitum (Mycobacterium fortuitum).